A 413-amino-acid polypeptide reads, in one-letter code: Tryptophan synthase beta chain (413 aa).

Lys-106 is modified (N6-(pyridoxal phosphate)lysine).

Belongs to the TrpB family. As to quaternary structure, tetramer of two alpha and two beta chains. The cofactor is pyridoxal 5'-phosphate.

The enzyme catalyses (1S,2R)-1-C-(indol-3-yl)glycerol 3-phosphate + L-serine = D-glyceraldehyde 3-phosphate + L-tryptophan + H2O. The protein operates within amino-acid biosynthesis; L-tryptophan biosynthesis; L-tryptophan from chorismate: step 5/5. In terms of biological role, the beta subunit is responsible for the synthesis of L-tryptophan from indole and L-serine. The chain is Tryptophan synthase beta chain from Methylorubrum populi (strain ATCC BAA-705 / NCIMB 13946 / BJ001) (Methylobacterium populi).